A 201-amino-acid polypeptide reads, in one-letter code: MVFIADYGAGNLRSVLKAFEFLGIKAIVSNDPRKMAGYRKVLLPGVGAFGQAMQSLEALGFVSALLEHVDKGGHLLGICLGMQLLLSESEEMGTHKGLNLVPGKVKHFVSSSDKIPQIGWNAVDFSKQSDLFRNVADHSFFYFVHSYYCETESVEAVAATTLFAGQNFCSAIEKNGIFAVQFHPEKSADAGLKVLANFAEL.

Positions 1 to 201 constitute a Glutamine amidotransferase type-1 domain; the sequence is MVFIADYGAG…LKVLANFAEL (201 aa). C79 acts as the Nucleophile in catalysis. Catalysis depends on residues H183 and E185.

As to quaternary structure, heterodimer of HisH and HisF.

It is found in the cytoplasm. The enzyme catalyses 5-[(5-phospho-1-deoxy-D-ribulos-1-ylimino)methylamino]-1-(5-phospho-beta-D-ribosyl)imidazole-4-carboxamide + L-glutamine = D-erythro-1-(imidazol-4-yl)glycerol 3-phosphate + 5-amino-1-(5-phospho-beta-D-ribosyl)imidazole-4-carboxamide + L-glutamate + H(+). It carries out the reaction L-glutamine + H2O = L-glutamate + NH4(+). Its pathway is amino-acid biosynthesis; L-histidine biosynthesis; L-histidine from 5-phospho-alpha-D-ribose 1-diphosphate: step 5/9. IGPS catalyzes the conversion of PRFAR and glutamine to IGP, AICAR and glutamate. The HisH subunit catalyzes the hydrolysis of glutamine to glutamate and ammonia as part of the synthesis of IGP and AICAR. The resulting ammonia molecule is channeled to the active site of HisF. The sequence is that of Imidazole glycerol phosphate synthase subunit HisH from Chlorobium chlorochromatii (strain CaD3).